The chain runs to 375 residues: Succinyl-diaminopimelate desuccinylase (375 aa).

H66 serves as a coordination point for Zn(2+). Residue D68 is part of the active site. Zn(2+) is bound at residue D99. The active-site Proton acceptor is the E133. Positions 134, 162, and 348 each coordinate Zn(2+).

Belongs to the peptidase M20A family. DapE subfamily. As to quaternary structure, homodimer. Requires Zn(2+) as cofactor. Co(2+) is required as a cofactor.

It catalyses the reaction N-succinyl-(2S,6S)-2,6-diaminopimelate + H2O = (2S,6S)-2,6-diaminopimelate + succinate. The protein operates within amino-acid biosynthesis; L-lysine biosynthesis via DAP pathway; LL-2,6-diaminopimelate from (S)-tetrahydrodipicolinate (succinylase route): step 3/3. Its function is as follows. Catalyzes the hydrolysis of N-succinyl-L,L-diaminopimelic acid (SDAP), forming succinate and LL-2,6-diaminopimelate (DAP), an intermediate involved in the bacterial biosynthesis of lysine and meso-diaminopimelic acid, an essential component of bacterial cell walls. This Photorhabdus laumondii subsp. laumondii (strain DSM 15139 / CIP 105565 / TT01) (Photorhabdus luminescens subsp. laumondii) protein is Succinyl-diaminopimelate desuccinylase.